A 297-amino-acid polypeptide reads, in one-letter code: Endonuclease G, mitochondrial (297 aa).

Residues 1-48 constitute a mitochondrion transit peptide; it reads MRALRAGLTLASGAGLGAVVEGWRRRREDARAAPGLLGRLPVLPVAAA. A Phosphothreonine; by GSK3-beta modification is found at Thr-128. The active-site Proton acceptor is the His-141. A Mg(2+)-binding site is contributed by Asn-172. An essential for deoxyribonuclease activity region spans residues 286 to 296; sequence AGSLKAITAGS. The residue at position 288 (Ser-288) is a Phosphoserine; by GSK3-beta.

It belongs to the DNA/RNA non-specific endonuclease family. As to quaternary structure, homodimer; disulfide-linked. Homodimerization is essential for enzyme activity. Interacts with YWHAG. Mg(2+) is required as a cofactor. In terms of processing, GSK3-beta-mediated dual phosphorylations at Thr-128 and Ser-288 is necessary for its interaction with YWHAG and the induction of autophagy.

The protein resides in the mitochondrion. Its function is as follows. Endonuclease that preferentially catalyzes the cleavage of double-stranded 5-hydroxymethylcytosine (5hmC)-modified DNA. The 5hmC-modified nucleotide does not increase the binding affinity, but instead increases the efficiency of cutting and specifies the site of cleavage for the modified DNAs. Shows significantly higher affinity for four-stranded Holliday junction over duplex and single-stranded DNAs. Promotes conservative recombination when the DNA is 5hmC-modified. Promotes autophagy through the suppression of mTOR by its phosphorylation-mediated interaction with YWHAG and its endonuclease activity-mediated DNA damage response. GSK3-beta mediated phosphorylation of ENDOG enhances its interaction with YWHAG, leading to the release of TSC2 and PIK3C3 from YWHAG resulting in mTOR pathway suppression and autophagy initiation. Promotes cleavage of mtDNA in response to oxidative and nitrosative stress, in turn inducing compensatory mtDNA replication. The polypeptide is Endonuclease G, mitochondrial (ENDOG) (Homo sapiens (Human)).